We begin with the raw amino-acid sequence, 152 residues long: Clitocypin-2 (152 aa).

Belongs to the protease inhibitor I48 family. As to quaternary structure, homodimer. Expressed in all analyzed tissues, but expression was higher in the pileus and in the lower part of the stipe.

In terms of biological role, binds and inhibits cysteine proteinases. Inhibits most strongly papain and cathepsin L, more weakly bromelain and cathepsin B while it is completely ineffective against cathepsin H. This chain is Clitocypin-2 (clt2), found in Clitocybe nebularis (Clouded agaric).